Here is a 274-residue protein sequence, read N- to C-terminus: Receptor-like protein 44 (274 aa).

Positions 1-24 (MTRSHRLLLLLLLIFQTAQRLTTA) are cleaved as a signal peptide. Topologically, residues 25–223 (DPNDEACLKN…PLQEMMMKSK (199 aa)) are extracellular. N-linked (GlcNAc...) asparagine glycosylation is found at asparagine 48, asparagine 82, and asparagine 95. LRR repeat units lie at residues 96-121 (CTNL…QYLV), 123-144 (LAVL…LALC), 145-168 (AYLN…LGLL), and 169-192 (ARLS…LSNR). N-linked (GlcNAc...) asparagine glycosylation occurs at asparagine 127. 2 N-linked (GlcNAc...) asparagine glycosylation sites follow: asparagine 191 and asparagine 200. A helical transmembrane segment spans residues 224 to 244 (GLSVMAIVGIGLGSGIASLMI). At 245–274 (SFTGVCLWLRITEKKIVEEEGKISQSMPDY) the chain is on the cytoplasmic side.

It belongs to the RLP family.

Its subcellular location is the cell membrane. The chain is Receptor-like protein 44 from Arabidopsis thaliana (Mouse-ear cress).